The following is a 543-amino-acid chain: Ribonuclease Y (543 aa).

Residues 4-24 (IIMIPVATAIVSLLVGTVTGY) form a helical membrane-spanning segment. Residues 233–296 (TVSVVDLPNE…EIAKRAMERL (64 aa)) enclose the KH domain. One can recognise an HD domain in the interval 359–452 (VLSHSIEVGK…VVAADTISSA (94 aa)).

It belongs to the RNase Y family.

The protein localises to the cell membrane. Endoribonuclease that initiates mRNA decay. This is Ribonuclease Y from Lactobacillus acidophilus (strain ATCC 700396 / NCK56 / N2 / NCFM).